The sequence spans 419 residues: Gamma-glutamyl phosphate reductase (419 aa).

This sequence belongs to the gamma-glutamyl phosphate reductase family.

It localises to the cytoplasm. It carries out the reaction L-glutamate 5-semialdehyde + phosphate + NADP(+) = L-glutamyl 5-phosphate + NADPH + H(+). It participates in amino-acid biosynthesis; L-proline biosynthesis; L-glutamate 5-semialdehyde from L-glutamate: step 2/2. Catalyzes the NADPH-dependent reduction of L-glutamate 5-phosphate into L-glutamate 5-semialdehyde and phosphate. The product spontaneously undergoes cyclization to form 1-pyrroline-5-carboxylate. This is Gamma-glutamyl phosphate reductase from Caldicellulosiruptor bescii (strain ATCC BAA-1888 / DSM 6725 / KCTC 15123 / Z-1320) (Anaerocellum thermophilum).